A 292-amino-acid polypeptide reads, in one-letter code: RWD domain-containing protein 2A (292 aa).

The RWD domain maps to 14–134; the sequence is LEMEMLFSMF…QWLQDNSASY (121 aa).

This is RWD domain-containing protein 2A (RWDD2A) from Homo sapiens (Human).